Reading from the N-terminus, the 234-residue chain is Triosephosphate isomerase (234 aa).

8 to 10 (NFK) provides a ligand contact to substrate. Histidine 90 functions as the Electrophile in the catalytic mechanism. Glutamate 159 (proton acceptor) is an active-site residue. Residues glycine 165 and serine 197 each coordinate substrate.

This sequence belongs to the triosephosphate isomerase family. In terms of assembly, homodimer.

Its subcellular location is the cytoplasm. It carries out the reaction D-glyceraldehyde 3-phosphate = dihydroxyacetone phosphate. The protein operates within carbohydrate biosynthesis; gluconeogenesis. It participates in carbohydrate degradation; glycolysis; D-glyceraldehyde 3-phosphate from glycerone phosphate: step 1/1. Involved in the gluconeogenesis. Catalyzes stereospecifically the conversion of dihydroxyacetone phosphate (DHAP) to D-glyceraldehyde-3-phosphate (G3P). This chain is Triosephosphate isomerase, found in Helicobacter pylori (strain G27).